The following is a 396-amino-acid chain: Elongation factor Tu (396 aa).

The tr-type G domain maps to 10–205 (KPHVNIGTIG…AVDSYIPTPE (196 aa)). Positions 19–26 (GHVDHGKT) are G1. 19-26 (GHVDHGKT) contacts GTP. Thr-26 contacts Mg(2+). The segment at 60 to 64 (GITIN) is G2. The segment at 81–84 (DCPG) is G3. Residues 81–85 (DCPGH) and 136–139 (NKCD) each bind GTP. A G4 region spans residues 136–139 (NKCD). The segment at 174 to 176 (SAK) is G5.

The protein belongs to the TRAFAC class translation factor GTPase superfamily. Classic translation factor GTPase family. EF-Tu/EF-1A subfamily. As to quaternary structure, monomer.

The protein localises to the cytoplasm. The catalysed reaction is GTP + H2O = GDP + phosphate + H(+). GTP hydrolase that promotes the GTP-dependent binding of aminoacyl-tRNA to the A-site of ribosomes during protein biosynthesis. The polypeptide is Elongation factor Tu (Brevibacillus brevis (strain 47 / JCM 6285 / NBRC 100599)).